We begin with the raw amino-acid sequence, 338 residues long: Tripartite motif-containing protein 44 (338 aa).

Disordered stretches follow at residues 1 to 25 and 72 to 162; these read MASG…EPDE and ARGD…EFDP. Positions 95-162 are enriched in acidic residues; it reads EAGEGIESEE…ETEAESEFDP (68 aa). The stretch at 109 to 153 forms a coiled coil; the sequence is EEESETEEESEDESEEDSEEEMEDEQESEAEEDNQEEGESEAEGE. The segment at 171-212 adopts a B box-type zinc-finger fold; sequence VAKRKCPDHGLDLSTYCQEDKQLICVLCPVIGAHHGHHLSTL. Residues C176, H179, C198, and H204 each contribute to the Zn(2+) site. Positions 257–322 form a coiled coil; that stretch reads QQEFKKVQKV…QLDTSNESAE (66 aa). The tract at residues 307 to 338 is disordered; it reads MAQAKEQLDTSNESAEPKAEGDEEEPGGTDED. Acidic residues predominate over residues 327–338; that stretch reads GDEEEPGGTDED.

Interacts (via coiled coil) with TRIM17 (via coiled coil).

Functionally, may play a role in the process of differentiation and maturation of neuronal cells. May regulate the activity of TRIM17. Is a negative regulator of PAX6 expression. This is Tripartite motif-containing protein 44 (TRIM44) from Bos taurus (Bovine).